We begin with the raw amino-acid sequence, 152 residues long: Regulatory protein RecX (152 aa).

Belongs to the RecX family.

It is found in the cytoplasm. Modulates RecA activity. This Chromohalobacter salexigens (strain ATCC BAA-138 / DSM 3043 / CIP 106854 / NCIMB 13768 / 1H11) protein is Regulatory protein RecX.